Reading from the N-terminus, the 101-residue chain is Large ribosomal subunit protein uL24 (101 aa).

The protein belongs to the universal ribosomal protein uL24 family. Part of the 50S ribosomal subunit.

Functionally, one of two assembly initiator proteins, it binds directly to the 5'-end of the 23S rRNA, where it nucleates assembly of the 50S subunit. In terms of biological role, one of the proteins that surrounds the polypeptide exit tunnel on the outside of the subunit. The protein is Large ribosomal subunit protein uL24 of Ruegeria sp. (strain TM1040) (Silicibacter sp.).